Here is a 501-residue protein sequence, read N- to C-terminus: uncharacterized protein (501 aa).

Helical transmembrane passes span 14–34 (AIFIIPFWILSIALWFSSGSV), 73–93 (FILFQIIPINILCFLPLLGYM), 111–131 (IFGIMMLITIPLFLIVSICIF), 197–217 (FIIATIVFSFSMLVIVLVLLI), 274–294 (ILLSIFQLFYIGSYFSLYYFG), 297–317 (FNLIPFFINLIILFISYYNLI), and 466–486 (FLVLIGLSGLFNILYLKRLIL).

Its subcellular location is the membrane. This is an uncharacterized protein from Dictyostelium discoideum (Social amoeba).